Consider the following 112-residue polypeptide: UPF0342 protein SSA_1465 (112 aa).

The protein belongs to the UPF0342 family.

In Streptococcus sanguinis (strain SK36), this protein is UPF0342 protein SSA_1465.